The following is a 714-amino-acid chain: Protein spire homolog 2 (714 aa).

Residues 22 to 203 enclose the KIND domain; sequence LSLEEVLKAY…RALFVETLEL (182 aa). A disordered region spans residues 136–162; that stretch reads DSEDSGCGAADEGYGGPEEEEEAEGVP. WH2 domains follow at residues 248 to 262, 278 to 296, and 342 to 359; these read QLMR…LKKV, PFEM…LRKV, and LHEK…LRPV. Phosphoserine is present on residues serine 371, serine 440, serine 442, and serine 476. Residues 453 to 516 form a disordered region; it reads VASGLQSATH…SSGDRPEASM (64 aa). The span at 486-496 shows a compositional bias: polar residues; sequence DQGTCPASVSD. The spir-box stretch occupies residues 534 to 554; the sequence is LALTVEEVMDVRRVLVKAEME.

The protein belongs to the spire family.

Its subcellular location is the cytoplasm. The protein resides in the cytoskeleton. The protein localises to the cytosol. It is found in the cell membrane. It localises to the cytoplasmic vesicle membrane. Its function is as follows. Acts as an actin nucleation factor, remains associated with the slow-growing pointed end of the new filament. Involved in intracellular vesicle transport along actin fibers, providing a novel link between actin cytoskeleton dynamics and intracellular transport. Required for asymmetric spindle positioning and asymmetric cell division during meiosis. Required for normal formation of the cleavage furrow and for polar body extrusion during female germ cell meiosis. Also acts in the nucleus: together with SPIRE1 and SPIRE2, promotes assembly of nuclear actin filaments in response to DNA damage in order to facilitate movement of chromatin and repair factors after DNA damage. This is Protein spire homolog 2 (SPIRE2) from Homo sapiens (Human).